The following is a 198-amino-acid chain: Probable GTP-binding protein EngB (198 aa).

One can recognise an EngB-type G domain in the interval aspartate 22–threonine 195. GTP is bound by residues glycine 30–serine 37, glycine 57–threonine 61, aspartate 75–glycine 78, threonine 142–aspartate 145, and phenylalanine 174–serine 176. Mg(2+)-binding residues include serine 37 and threonine 59.

The protein belongs to the TRAFAC class TrmE-Era-EngA-EngB-Septin-like GTPase superfamily. EngB GTPase family. Requires Mg(2+) as cofactor.

Its function is as follows. Necessary for normal cell division and for the maintenance of normal septation. In Bacillus cereus (strain G9842), this protein is Probable GTP-binding protein EngB.